Here is a 417-residue protein sequence, read N- to C-terminus: Gamma-glutamyl phosphate reductase (417 aa).

The protein belongs to the gamma-glutamyl phosphate reductase family.

It is found in the cytoplasm. It carries out the reaction L-glutamate 5-semialdehyde + phosphate + NADP(+) = L-glutamyl 5-phosphate + NADPH + H(+). Its pathway is amino-acid biosynthesis; L-proline biosynthesis; L-glutamate 5-semialdehyde from L-glutamate: step 2/2. Catalyzes the NADPH-dependent reduction of L-glutamate 5-phosphate into L-glutamate 5-semialdehyde and phosphate. The product spontaneously undergoes cyclization to form 1-pyrroline-5-carboxylate. The protein is Gamma-glutamyl phosphate reductase of Heliobacterium modesticaldum (strain ATCC 51547 / Ice1).